We begin with the raw amino-acid sequence, 465 residues long: MSAKLLNSNLWEADPELFDIIVKEKDRQRAGLEMIASENFTSVPVLQCLSSCLHNKYSEGMPNQRYYGGNEYIDEIEILAQNRSLEAYRLKSEEWGVNVQPYSGSPANFAVYTGIVEPHGRIMGLDLPDGGHLTHGFFTATKKISATSIFFESMPYKVDPKSGLIDYDKLAETAKLFKPRLIIAGMSCYSRCLDYKRFREIADANGAYLMADMAHVSGLVAAGVIPSPFEYCDIVTTTTHKTLRGPRAGVIFFRKGVRSVKANGQKVMYDLESKINQAVFPGLQGGPHNHAIAAIATAMKQATTTEFVEYQKQVIKNAQRLCEGLISRGYSIATGGTDVHLALVDLRGVGLRGAPAERVLELCSVACNKNTVPGDISALNPSGIRLGTPALTTRGLKEADIDKVVDFIDRALKIGLEIIKVSGLKLVDFNKAIEENAEFKKKIENLKEEVENYSKSFPLPGFDKY.

Lysine 241 bears the N6-(pyridoxal phosphate)lysine mark.

It belongs to the SHMT family. In terms of assembly, homotetramer. The cofactor is pyridoxal 5'-phosphate. As to expression, highest expression in the ovary and testis. 6- to 7-fold lower expression in hemocyte, silk gland, midgut and fat body.

The enzyme catalyses (6R)-5,10-methylene-5,6,7,8-tetrahydrofolate + glycine + H2O = (6S)-5,6,7,8-tetrahydrofolate + L-serine. Its pathway is one-carbon metabolism; tetrahydrofolate interconversion. Its function is as follows. Interconversion of serine and glycine. This is Serine hydroxymethyltransferase (692975) from Bombyx mori (Silk moth).